We begin with the raw amino-acid sequence, 522 residues long: F-box-like/WD repeat-containing protein TBL1XR1-B (522 aa).

One can recognise a LisH domain in the interval 4-36 (SSDEVNFLVYRYLQESGFSHSAFTFGIESHISQ). An F-box-like domain is found at 41–86 (GALVPPAALISIIQKGLQYVEAEVSINEDGTLFDGRPIESLSLIDA). The segment at 122–150 (ATSANNQQPPAKNGESTANGEENGGHALA) is disordered. The span at 123-141 (TSANNQQPPAKNGESTANG) shows a compositional bias: polar residues. WD repeat units follow at residues 175–214 (GHES…TSGS), 231–270 (PSNK…ASTL), 272–311 (QHKG…AKQQ), 314–352 (FHSA…PIKT), 355–394 (GHTN…CVHD), 397–445 (AHNK…CIHT), 448–487 (KHQE…LVHS), and 489–522 (RGTG…DLRK).

The protein belongs to the WD repeat EBI family. In terms of assembly, interacts with heterodimers of rxra and thrb, and this interaction is abrogated by thyroid hormone binding to thrb. Interacts with ncor1.

It localises to the nucleus. Its function is as follows. F-box-like protein which acts as an integral component of the N-CoR transcriptional corepressor complex. Probably regulates transcription activation mediated by nuclear receptors. May mediate the recruitment of the 19S proteasome complex, leading to the subsequent proteasomal degradation of the N-CoR complex, thereby allowing cofactor exchange and transcription activation. This chain is F-box-like/WD repeat-containing protein TBL1XR1-B (tbl1xr1-b), found in Xenopus laevis (African clawed frog).